The sequence spans 239 residues: Ribosomal RNA small subunit methyltransferase G (239 aa).

S-adenosyl-L-methionine-binding positions include glycine 79, phenylalanine 84, 130–131 (AE), and arginine 149.

This sequence belongs to the methyltransferase superfamily. RNA methyltransferase RsmG family.

The protein localises to the cytoplasm. Specifically methylates the N7 position of a guanine in 16S rRNA. In Lactobacillus johnsonii (strain CNCM I-12250 / La1 / NCC 533), this protein is Ribosomal RNA small subunit methyltransferase G.